A 1453-amino-acid chain; its full sequence is Leucine-rich repeat-containing protein 9 (1453 aa).

LRR repeat units lie at residues 53–78 (FPNLTSLTIVAQDIKEISGLEPCLQL), 97–119 (CRNLEKLYLYFNKISKIENLEKL), 120–141 (IKLKVLWLNHNTIKNIEGLQTL), 142–164 (KNLKDLNLAGNLINSIGRCLDSN), 166–188 (QLERLNLSGNQICSFKELTNLTR), 224–248 (LQRFDTLDVSAKQIKELADTTAMKK), and 264–287 (KEDLEKLNDQKCKLQKLPEERVKL). Positions 302–321 (LKGSGKGHSDGSNNSKVTDP) are disordered. LRR repeat units follow at residues 344–367 (LNALNERVTFWNKKLDEIEAIYHI), 671–693 (KARPKLISLDDKTILSLAKTSVY), 694–715 (SHIVSLNLHGNSLSKLRDLSKL), 716–737 (TGLRKLNISFNEFTCLDDVYHL), 739–758 (NLEYLDASHNHVITLEGFRG), 759–784 (LMKLKHLDLSWNQLKKSGNEINMLCK), 786–812 (TTSLLTLDIQHNPWQKPATLRLSVIGR), 886–908 (YLKITALNLDGQHLFEITNLEKL), 909–930 (ENLKWASFSNNNLTKMEGLESC), 931–952 (INLEELTLDGNCISKIEGISKM), 953–975 (TKLTRLSINNNLLTGWEEHTFDN), 976–1001 (MLHLHSLSLENNRITSLSGLQKSFTL), 1023–1048 (LCNLVILDMCGNIIIWNQENYRLFVI), 1092–1115 (FKQMQELNWTSSSIRTVDLIPVDQ), 1116–1138 (FRNVCNVNLQNNHLTSFSGLIYL), 1139–1161 (PNVKVLCLNYNHIESIMPRLKPQ), 1201–1224 (MHSLEVLHLGYNGICNLIQLQLNR), 1225–1247 (LRNLKFLFLQGNEISQVEGLDNL), 1248–1270 (VVLQELVVDHNRIRSFNDSAFAK), 1272–1292 (SSLLALHLEENRLRELGKLQS), 1293–1317 (LVKLEKLFLGYNKIQDITELEKLDV), 1319–1345 (STLRELTVYGNPICRKMLHRHMLIFRL), and 1365–1388 (EFHLAELQAKKNSLIPVTHSPMDG).

The polypeptide is Leucine-rich repeat-containing protein 9 (LRRC9) (Homo sapiens (Human)).